The chain runs to 440 residues: Protein arginine N-methyltransferase 2 (440 aa).

Positions 147–194 (LSSGSEDGDEEMEVQQDDDEEAPQLVSTEDVEPTVEEPKFIPPDAKEK) are disordered. The segment covering 152–168 (EDGDEEMEVQQDDDEEA) has biased composition (acidic residues). Over residues 182 to 194 (EEPKFIPPDAKEK) the composition is skewed to basic and acidic residues. The 249-residue stretch at 192–440 (KEKQVTSEEY…RYAVGTSNRL (249 aa)) folds into the RMT2 domain. S-adenosyl-L-methionine-binding positions include Tyr201, Met230, 252-257 (FGMGIV), 273-275 (EAH), 310-311 (WQ), and Asp330.

It belongs to the class I-like SAM-binding methyltransferase superfamily. RMT2 methyltransferase family. Monomer.

The protein localises to the cytoplasm. The protein resides in the nucleus. S-adenosyl-L-methionine-dependent protein-arginine N-methyltransferase that methylates the delta-nitrogen atom of arginine residues to form N5-methylarginine (type IV) in target proteins. Monomethylates ribosomal protein L12. This is Protein arginine N-methyltransferase 2 from Gibberella zeae (strain ATCC MYA-4620 / CBS 123657 / FGSC 9075 / NRRL 31084 / PH-1) (Wheat head blight fungus).